Reading from the N-terminus, the 990-residue chain is MPKREIEDTQSPYSSTGLVSTGESPKTSTSTPTSSTNNRAATTTTNNTSTTSTSLLKSNSNLQPIAMTPSVSSTSLAINKPKSQENKRRRVTRACDTCRQKKVKCDGKQPCIHCTVYSYKCSYDQPNIRNKKNSGIPIPSQPSPAILQVAAQAAVAFGSNNNSSNQQSLQSLQQQQQHVVHQHQHQPLPADEPIPKTNLIIFQQIINALLPKLQLNGFDPNLQFDLNKFQKVVQYVMSKSQTFTLNLNEITELMQDPDSQIPPPPPASSSSSHHRRTLSVGSFDDSSNSAVSSPREVGLHLPSKEVALNLIYTTWNKACVLFRFYHRPSLLEEVDLLYSLDPMNYGDRQQKFLPFLYSILACGSLFSKTPYTMGTPSENEKNLEDDGFKYFLEARKLIDISNVGDINSIQTVVMMIIYLQCSARLSTCYSYIGIALRSALKEGLHRNLTLFQNSKKKLDPIEEDTRKRLFYTIYKMDIYINSLLGLPRSLNEDEFDQLLPVELDDENVTRTEYLFDKQQGRLSSSGCANQHTKLMFILSHIIKKMYPIKVKPEEAENSSNVNYSRDRIHAKVTELEVELKNWLDNLPQELKPIDPSSTTKDVIDEVPEKFRLANYYLHLAFLNCQIILYRPFIHFISDSMDGSSSDPRSLIRGRNCIKVARMVVKLANKMIDHKLLLGTYWFSMYTIFFSIACLIYYFHFANYNNNGQGFNYAGILFDDDLNIDMIKKDIEIGKKVLDNLKNSSNSSLRIYNILNTMFEQLNRRTASRSRQVTATTNSTTTTANTNSNSNSNSQPTTLPANFQNVNVKNTFENFDNMNHFVKKERERERESLSQLFDNTSMAKFESSSEIPKNVANIQRVATPLEENNKEIGEVSGGNLTSNYMPGVFDKLDTQIFGKILPPYMLEKNETMNYNSNNNNSNNVNNNFNNNNNAGEVNNNSNGVAYNNNAANWPLNNAEDGLNLEDLFGTLGNNGNGGTSSSNGLEYLDPF.

The interval 1–88 (MPKREIEDTQ…NKPKSQENKR (88 aa)) is disordered. A compositionally biased stretch (polar residues) spans 9-23 (TQSPYSSTGLVSTGE). The span at 24-61 (SPKTSTSTPTSSTNNRAATTTTNNTSTTSTSLLKSNSN) shows a compositional bias: low complexity. Residues 95-121 (CDTCRQKKVKCDGKQPCIHCTVYSYKC) constitute a DNA-binding region (zn(2)-C6 fungal-type). Composition is skewed to low complexity over residues 160-179 (NNNSSNQQSLQSLQQQQQHV), 282-293 (SFDDSSNSAVSS), and 773-793 (TATTNSTTTTANTNSNSNSNS). 4 disordered regions span residues 160-192 (NNNSSNQQSLQSLQQQQQHVVHQHQHQPLPADE), 255-295 (QDPD…SSPR), 764-800 (RTASRSRQVTATTNSTTTTANTNSNSNSNSQPTTLPA), and 915-944 (SNNNNSNNVNNNFNNNNNAGEVNNNSNGVA).

It belongs to the ASG1 family.

It is found in the nucleus. Functionally, transcription factor necessary to sustain growth on non-fermentative carbon sources such as sodium acetate, acetic acid, or ethanol. Plays a role in hyphal formation. The protein is Activator of stress genes protein 1 (ASG1) of Candida albicans (strain SC5314 / ATCC MYA-2876) (Yeast).